Here is a 1012-residue protein sequence, read N- to C-terminus: Alanine--tRNA ligase, mitochondrial (1012 aa).

Residues 1–24 (MYNSAKQLQRVLTAREIRKTFLDH) constitute a mitochondrion transit peptide. Residues H656, H660, C766, and H770 each contribute to the Zn(2+) site.

This sequence belongs to the class-II aminoacyl-tRNA synthetase family. Monomer. It depends on Zn(2+) as a cofactor.

It is found in the mitochondrion. It carries out the reaction tRNA(Ala) + L-alanine + ATP = L-alanyl-tRNA(Ala) + AMP + diphosphate. In terms of biological role, catalyzes the attachment of alanine to tRNA(Ala) in a two-step reaction: alanine is first activated by ATP to form Ala-AMP and then transferred to the acceptor end of tRNA(Ala). Also edits incorrectly charged tRNA(Ala) via its editing domain. This is Alanine--tRNA ligase, mitochondrial from Drosophila melanogaster (Fruit fly).